Here is a 75-residue protein sequence, read N- to C-terminus: UPF0352 protein VF_1649 (75 aa).

Belongs to the UPF0352 family.

This Aliivibrio fischeri (strain ATCC 700601 / ES114) (Vibrio fischeri) protein is UPF0352 protein VF_1649.